Here is a 191-residue protein sequence, read N- to C-terminus: MKVGIIMGSVRAKRVCPEIAAYVKRTIENSEELIDQKLKIQVVDLQQIALPLYEDDDELIPAQIKSVDEYADSKTRSWSRIVNALDIIVFVTPQYNWGYPAALKNAIDRLYHEWHGKPALVVSYGGHGGSKCNDQLQEVLHGLKMNVIGGVAVKIPVGTIPLPEDIVPQLSVHNEEILQLLASCIETTRNK.

FMN is bound by residues arginine 11, 94 to 97, and tyrosine 124; that span reads QYNW.

As to quaternary structure, homodimer.

The protein localises to the cytoplasm. It localises to the nucleus. It catalyses the reaction FMNH2 + NADP(+) = FMN + NADPH + 2 H(+). The catalysed reaction is FMNH2 + NAD(+) = FMN + NADH + 2 H(+). Functionally, has several reductase activities that are NAD(P)H-dependent and involve FMN as a cofactor, ferricyanide being the best substrate for reduction. May be involved in ferric iron assimilation. The sequence is that of NAD(P)H-dependent FMN reductase LOT6 (LOT6) from Saccharomyces cerevisiae (strain ATCC 204508 / S288c) (Baker's yeast).